A 758-amino-acid polypeptide reads, in one-letter code: 5-methyltetrahydropteroyltriglutamate--homocysteine methyltransferase (758 aa).

5-methyltetrahydropteroyltri-L-glutamate is bound by residues 17 to 20 (RELK) and lysine 110. L-homocysteine-binding positions include 428-430 (IGS) and glutamate 481. L-methionine is bound by residues 428-430 (IGS) and glutamate 481. 5-methyltetrahydropteroyltri-L-glutamate is bound by residues 512-513 (RC) and tryptophan 558. Aspartate 596 is a binding site for L-homocysteine. Aspartate 596 is a binding site for L-methionine. Glutamate 602 contributes to the 5-methyltetrahydropteroyltri-L-glutamate binding site. Zn(2+)-binding residues include histidine 638, cysteine 640, and glutamate 662. The Proton donor role is filled by histidine 691. A Zn(2+)-binding site is contributed by cysteine 723.

The protein belongs to the vitamin-B12 independent methionine synthase family. Zn(2+) is required as a cofactor.

The enzyme catalyses 5-methyltetrahydropteroyltri-L-glutamate + L-homocysteine = tetrahydropteroyltri-L-glutamate + L-methionine. Its pathway is amino-acid biosynthesis; L-methionine biosynthesis via de novo pathway; L-methionine from L-homocysteine (MetE route): step 1/1. Functionally, catalyzes the transfer of a methyl group from 5-methyltetrahydrofolate to homocysteine resulting in methionine formation. The chain is 5-methyltetrahydropteroyltriglutamate--homocysteine methyltransferase from Thermosynechococcus vestitus (strain NIES-2133 / IAM M-273 / BP-1).